Consider the following 175-residue polypeptide: GTP-dependent dephospho-CoA kinase (175 aa).

GTP-binding residues include Asp48, Val49, Val50, Asp66, and Glu124.

It belongs to the GTP-dependent DPCK family.

It catalyses the reaction 3'-dephospho-CoA + GTP = GDP + CoA + H(+). It participates in cofactor biosynthesis; coenzyme A biosynthesis. In terms of biological role, catalyzes the GTP-dependent phosphorylation of the 3'-hydroxyl group of dephosphocoenzyme A to form coenzyme A (CoA). The polypeptide is GTP-dependent dephospho-CoA kinase (Thermofilum pendens (strain DSM 2475 / Hrk 5)).